The chain runs to 529 residues: Peptide chain release factor 3 (529 aa).

One can recognise a tr-type G domain in the interval 11 to 280; it reads AARRTFAIIS…GLVAWAPPPM (270 aa). Residues 20–27, 88–92, and 142–145 each bind GTP; these read SHPDAGKT, DTPGH, and NKVD.

The protein belongs to the TRAFAC class translation factor GTPase superfamily. Classic translation factor GTPase family. PrfC subfamily.

The protein localises to the cytoplasm. Functionally, increases the formation of ribosomal termination complexes and stimulates activities of RF-1 and RF-2. It binds guanine nucleotides and has strong preference for UGA stop codons. It may interact directly with the ribosome. The stimulation of RF-1 and RF-2 is significantly reduced by GTP and GDP, but not by GMP. In Sodalis glossinidius (strain morsitans), this protein is Peptide chain release factor 3.